The chain runs to 243 residues: Uridylate kinase (243 aa).

18-21 (KLGG) is an ATP binding site. G59 provides a ligand contact to UMP. ATP contacts are provided by G60 and R64. UMP-binding positions include D79 and 140–147 (MGMPYFST). ATP-binding residues include Y173 and D176.

This sequence belongs to the UMP kinase family. As to quaternary structure, homohexamer.

The protein resides in the cytoplasm. The catalysed reaction is UMP + ATP = UDP + ADP. The protein operates within pyrimidine metabolism; CTP biosynthesis via de novo pathway; UDP from UMP (UMPK route): step 1/1. Its activity is regulated as follows. Inhibited by UTP. Catalyzes the reversible phosphorylation of UMP to UDP. In Corynebacterium glutamicum (strain R), this protein is Uridylate kinase.